Reading from the N-terminus, the 535-residue chain is T-complex protein 1 subunit epsilon (535 aa).

It belongs to the TCP-1 chaperonin family. In terms of assembly, heterooligomeric complex of about 850 to 900 kDa that forms two stacked rings, 12 to 16 nm in diameter.

It is found in the cytoplasm. Molecular chaperone; assists the folding of proteins upon ATP hydrolysis. Known to play a role, in vitro, in the folding of actin and tubulin. This chain is T-complex protein 1 subunit epsilon, found in Arabidopsis thaliana (Mouse-ear cress).